The following is a 425-amino-acid chain: 2-methylserine hydroxymethyltransferase (425 aa).

Residues L126 and 130-132 (GHL) each bind (6S)-5,6,7,8-tetrahydrofolate. K235 bears the N6-(pyridoxal phosphate)lysine mark. A (6S)-5,6,7,8-tetrahydrofolate-binding site is contributed by E251.

Belongs to the SHMT family. In terms of assembly, homodimer. Pyridoxal 5'-phosphate serves as cofactor.

It is found in the cytoplasm. The catalysed reaction is (6R)-5,10-methylene-5,6,7,8-tetrahydrofolate + D-alanine + H2O = 2-methylserine + (6S)-5,6,7,8-tetrahydrofolate. It participates in one-carbon metabolism; tetrahydrofolate interconversion. With respect to regulation, inhibited by hydroxylamine and sodium borohydride. Its function is as follows. Catalyzes the reversible interconversion of alpha-methyl-L-serine to D-alanine with tetrahydrofolate (THF) serving as the one-carbon carrier. Cannot use alpha-methyl-D-serine, L-serine, D-serine or L-alanine. The sequence is that of 2-methylserine hydroxymethyltransferase from Paracoccus sp.